The primary structure comprises 384 residues: Queuine tRNA-ribosyltransferase (384 aa).

Asp92 (proton acceptor) is an active-site residue. Substrate is bound by residues 92–96, Asp146, Gln190, and Gly217; that span reads DSGGF. An RNA binding region spans residues 248–254; that stretch reads GVGRPED. The active-site Nucleophile is the Asp267. The interval 272–276 is RNA binding; important for wobble base 34 recognition; the sequence is TRHAR. Positions 305, 307, 310, and 337 each coordinate Zn(2+).

The protein belongs to the queuine tRNA-ribosyltransferase family. As to quaternary structure, homodimer. Within each dimer, one monomer is responsible for RNA recognition and catalysis, while the other monomer binds to the replacement base PreQ1. Zn(2+) serves as cofactor.

The enzyme catalyses 7-aminomethyl-7-carbaguanine + guanosine(34) in tRNA = 7-aminomethyl-7-carbaguanosine(34) in tRNA + guanine. It functions in the pathway tRNA modification; tRNA-queuosine biosynthesis. In terms of biological role, catalyzes the base-exchange of a guanine (G) residue with the queuine precursor 7-aminomethyl-7-deazaguanine (PreQ1) at position 34 (anticodon wobble position) in tRNAs with GU(N) anticodons (tRNA-Asp, -Asn, -His and -Tyr). Catalysis occurs through a double-displacement mechanism. The nucleophile active site attacks the C1' of nucleotide 34 to detach the guanine base from the RNA, forming a covalent enzyme-RNA intermediate. The proton acceptor active site deprotonates the incoming PreQ1, allowing a nucleophilic attack on the C1' of the ribose to form the product. After dissociation, two additional enzymatic reactions on the tRNA convert PreQ1 to queuine (Q), resulting in the hypermodified nucleoside queuosine (7-(((4,5-cis-dihydroxy-2-cyclopenten-1-yl)amino)methyl)-7-deazaguanosine). The sequence is that of Queuine tRNA-ribosyltransferase from Xylella fastidiosa (strain M12).